A 63-amino-acid chain; its full sequence is High-potential iron-sulfur protein (63 aa).

Cys-23, Cys-26, Cys-41, and Cys-56 together coordinate [4Fe-4S] cluster.

Belongs to the high-potential iron-sulfur protein (HiPIP) family. In terms of assembly, homodimer.

Its function is as follows. Specific class of high-redox-potential 4Fe-4S ferredoxins. Functions in anaerobic electron transport in most purple and in some other photosynthetic bacteria and in at least one genus (Paracoccus) of halophilic, denitrifying bacteria. This is High-potential iron-sulfur protein (hip) from Rhodocyclus tenuis (Rhodospirillum tenue).